Consider the following 338-residue polypeptide: Protein FosB (338 aa).

Disordered stretches follow at residues 1–54 and 80–179; these read MFQA…PGSF and AQSQ…RREL. 2 stretches are compositionally biased toward polar residues: residues 13–31 and 102–112; these read SRCS…SVDS and TSYSTPGLSAY. Position 27 is a phosphoserine (S27). Residues 123–137 show a composition bias toward low complexity; it reads PSTSTTTSGPVSARP. Residues 155 to 218 form the bZIP domain; it reads EEKRRVRRER…ERLEFVLVAH (64 aa). A basic motif region spans residues 157–182; the sequence is KRRVRRERNKLAAAKCRNRRRELTDR. The interval 183–211 is leucine-zipper; it reads LQAETDQLEEEKAELESEIAELQKEKERL. Disordered regions lie at residues 222–276 and 316–338; these read CKIP…PPNL and GAQR…LLAL. Pro residues predominate over residues 256-265; that stretch reads LPPPPPPPLP. Composition is skewed to polar residues over residues 266 to 276 and 318 to 338; these read FQSSRDAPPNL and QRTS…LLAL.

The protein belongs to the bZIP family. Fos subfamily. As to quaternary structure, heterodimer; binds to DNA as heterodimer. Component of an AP-1 transcription factor complex; composed of FOS-JUN heterodimers. As part of the AP-1 transcription factor complex, forms heterodimers with JUN, JUNB or JUND, thereby binding to the AP-1 consensus sequence and stimulating transcription. Interacts with the BAF multiprotein chromatin-remodeling complex subunits SMARCB1 and SMARCD1. Interacts with ARID1A and JUN. Homodimer under oxidizing conditions and monomer under reducing conditions (in vitro). Heterodimer; binds to DNA as heterodimer. Forms heterodimers with JUNB, JUN or JUND; thereby binding to the AP-1 consensus sequence but does not stimulate transcription. Forms heterodimers with JUND under oxidizing conditions. Post-translationally, phosphorylated. In terms of processing, phosphorylated at Ser-27 by CSNK2A1; phosphorylation increases protein stability and transactivation potential. As to expression, expressed in brain, including the preoptic area of the hypothalamus, the main and accessory olfactory bulbs, the pyriform cortex and the hippocampus (at protein level). Expressed in the neurons of the subgranular zone of the dentate gyrus in the hippocampus (at protein level). Expressed in pyramidal cells in CA1 and CA3, in the dentate gyrus and the nucleus accumbens of the striatum (at protein level). Expressed in the core and shell of the nucleus accumbens of the striatum (at protein level). Expressed in the neurons of the subgranular zone of the dentate gyrus in the hippocampus (at protein level).

It is found in the nucleus. Heterodimerizes with proteins of the JUN family to form an AP-1 transcription factor complex, thereby enhancing their DNA binding activity to gene promoters containing an AP-1 consensus sequence 5'-TGA[GC]TCA-3' and enhancing their transcriptional activity. As part of the AP-1 complex, facilitates enhancer selection together with cell-type-specific transcription factors by collaboratively binding to nucleosomal enhancers and recruiting the SWI/SNF (BAF) chromatin remodeling complex to establish accessible chromatin. Together with JUN, plays a role in activation-induced cell death of T cells by binding to the AP-1 promoter site of FASLG/CD95L, and inducing its transcription in response to activation of the TCR/CD3 signaling pathway. Exhibits transactivation activity in vitro. Involved in the display of nurturing behavior towards newborns. May play a role in neurogenesis in the hippocampus and in learning and memory-related tasks by regulating the expression of various genes involved in neurogenesis, depression and epilepsy. Implicated in behavioral responses related to morphine reward and spatial memory. Its function is as follows. Exhibits lower transactivation activity than isoform 1 in vitro. The heterodimer with JUN does not display any transcriptional activity, and may thereby act as an transcriptional inhibitor. May be involved in the regulation of neurogenesis in the hippocampus. May play a role in synaptic modifications in nucleus accumbens medium spiny neurons and thereby play a role in adaptive and pathological reward-dependent learning, including maladaptive responses involved in drug addiction. Seems to be more stably expressed with a half-life of ~9.5 hours in cell culture as compared to 1.5 hours half-life of isoform 1. This Mus musculus (Mouse) protein is Protein FosB.